The following is a 317-amino-acid chain: Probable RuBisCO transcriptional regulator (317 aa).

The 58-residue stretch at 6–63 folds into the HTH lysR-type domain; it reads FTLDQLRILRAILIQGSFKKAATSLYISQPAVSSHVHNIEKQLNIQLFDRSHRNAQLT. The segment at residues 23–42 is a DNA-binding region (H-T-H motif); it reads FKKAATSLYISQPAVSSHVH.

This sequence belongs to the LysR transcriptional regulatory family.

Its subcellular location is the plastid. The protein localises to the chloroplast. Trans-acting transcriptional regulator of RuBisCO genes (rbcL and rbcS) expression. The chain is Probable RuBisCO transcriptional regulator (rbcR) from Cyanidium caldarium (Red alga).